Consider the following 201-residue polypeptide: MEIEDKIRKAYEESVRVKEQFFRENISLIKEVAEIIAKSLNEGGKILIFGNGGSATDASHIAAEFVNRFKRERPGLPAIALNTDMAVLTAIANDYDYSEIFAKQVKALGESGDIVIGISTSGSSRNVIKAIEVAKKRGLKSIAFTSKKGEKLISKVDYAFAVPSEDTPRIQETHITLGHILCELVEDILFEIPAAKKKLKQ.

In terms of domain architecture, SIS spans 36 to 195 (IAKSLNEGGK…EDILFEIPAA (160 aa)). 51-53 (NGG) provides a ligand contact to substrate. 2 residues coordinate Zn(2+): His-60 and Glu-64. Residues Glu-64, 93–94 (ND), 119–121 (STS), Ser-124, and Gln-171 contribute to the substrate site. The Zn(2+) site is built by Gln-171 and His-179.

This sequence belongs to the SIS family. GmhA subfamily. It depends on Zn(2+) as a cofactor.

The protein resides in the cytoplasm. The catalysed reaction is 2 D-sedoheptulose 7-phosphate = D-glycero-alpha-D-manno-heptose 7-phosphate + D-glycero-beta-D-manno-heptose 7-phosphate. Its pathway is carbohydrate biosynthesis; D-glycero-D-manno-heptose 7-phosphate biosynthesis; D-glycero-alpha-D-manno-heptose 7-phosphate and D-glycero-beta-D-manno-heptose 7-phosphate from sedoheptulose 7-phosphate: step 1/1. Catalyzes the isomerization of sedoheptulose 7-phosphate in D-glycero-D-manno-heptose 7-phosphate. The protein is Phosphoheptose isomerase of Thermodesulfovibrio yellowstonii (strain ATCC 51303 / DSM 11347 / YP87).